A 292-amino-acid polypeptide reads, in one-letter code: Tissue factor (292 aa).

The N-terminal stretch at 1-32 (MAPPTRLQVPRPGTAVPYTVLLGWLLAQVARA) is a signal peptide. The Extracellular segment spans residues 33-250 (ADTTGRAYNL…SREQGRAREM (218 aa)). 2 consecutive Fibronectin type-III domains span residues 35–126 (TTGR…PFRN) and 148–240 (QVGT…TECT). N-linked (GlcNAc...) asparagine glycosylation is present at Asn41. 2 consecutive short sequence motifs (WKS motif) follow at residues 44 to 46 (WKS) and 75 to 77 (WKS). A disulfide bond links Cys79 and Cys87. N-linked (GlcNAc...) asparagine glycosylation is found at Asn114, Asn154, Asn167, and Asn182. A disulfide bridge connects residues Cys216 and Cys239. A helical membrane pass occupies residues 251–271 (FFIIGAVVVVALLIIVLSVTV). The Cytoplasmic segment spans residues 272–292 (YKCRKARAGPSGKESSPLNIA). Residue Cys274 is the site of S-palmitoyl cysteine attachment.

This sequence belongs to the tissue factor family. As to quaternary structure, interacts with HSPE; the interaction, inhibited by heparin, promotes the generation of activated factor X and activates coagulation in the presence of activated factor VII. In terms of tissue distribution, brain, heart.

It localises to the membrane. Its function is as follows. Initiates blood coagulation by forming a complex with circulating factor VII or VIIa. The [TF:VIIa] complex activates factors IX or X by specific limited proteolysis. TF plays a role in normal hemostasis by initiating the cell-surface assembly and propagation of the coagulation protease cascade. This Oryctolagus cuniculus (Rabbit) protein is Tissue factor (F3).